A 274-amino-acid polypeptide reads, in one-letter code: Large ribosomal subunit protein uL2 (274 aa).

The tract at residues 222 to 257 (GVAMNPVDHPHGGGEGRTSGGRHPVSPWGVPTKGYK) is disordered.

It belongs to the universal ribosomal protein uL2 family. In terms of assembly, part of the 50S ribosomal subunit. Forms a bridge to the 30S subunit in the 70S ribosome.

Its function is as follows. One of the primary rRNA binding proteins. Required for association of the 30S and 50S subunits to form the 70S ribosome, for tRNA binding and peptide bond formation. It has been suggested to have peptidyltransferase activity; this is somewhat controversial. Makes several contacts with the 16S rRNA in the 70S ribosome. The sequence is that of Large ribosomal subunit protein uL2 from Nitrosococcus oceani (strain ATCC 19707 / BCRC 17464 / JCM 30415 / NCIMB 11848 / C-107).